A 130-amino-acid chain; its full sequence is MSMQDPISDMLTRVRNGQAANKVAVKMPSSKLKVAIAALLKAEGYIADFAVEGDIKPELEITLKYFQAKPVIEQIQRVSRPGLRVYKKNDALPSVMGGLGIAVVSTSKGLMSDRAARKAGLGGEIICYVA.

It belongs to the universal ribosomal protein uS8 family. As to quaternary structure, part of the 30S ribosomal subunit. Contacts proteins S5 and S12.

Functionally, one of the primary rRNA binding proteins, it binds directly to 16S rRNA central domain where it helps coordinate assembly of the platform of the 30S subunit. The polypeptide is Small ribosomal subunit protein uS8 (Aliivibrio fischeri (strain ATCC 700601 / ES114) (Vibrio fischeri)).